Here is a 159-residue protein sequence, read N- to C-terminus: 2-C-methyl-D-erythritol 2,4-cyclodiphosphate synthase (159 aa).

A divalent metal cation-binding residues include Asp-10 and His-12. 4-CDP-2-C-methyl-D-erythritol 2-phosphate contacts are provided by residues Asp-10 to His-12 and His-36 to Ser-37. Position 44 (His-44) interacts with a divalent metal cation. 4-CDP-2-C-methyl-D-erythritol 2-phosphate is bound by residues Asp-58–Gly-60, Thr-134–Glu-137, Phe-141, and Arg-144.

The protein belongs to the IspF family. Homotrimer. A divalent metal cation is required as a cofactor.

The catalysed reaction is 4-CDP-2-C-methyl-D-erythritol 2-phosphate = 2-C-methyl-D-erythritol 2,4-cyclic diphosphate + CMP. The protein operates within isoprenoid biosynthesis; isopentenyl diphosphate biosynthesis via DXP pathway; isopentenyl diphosphate from 1-deoxy-D-xylulose 5-phosphate: step 4/6. Involved in the biosynthesis of isopentenyl diphosphate (IPP) and dimethylallyl diphosphate (DMAPP), two major building blocks of isoprenoid compounds. Catalyzes the conversion of 4-diphosphocytidyl-2-C-methyl-D-erythritol 2-phosphate (CDP-ME2P) to 2-C-methyl-D-erythritol 2,4-cyclodiphosphate (ME-CPP) with a corresponding release of cytidine 5-monophosphate (CMP). This chain is 2-C-methyl-D-erythritol 2,4-cyclodiphosphate synthase, found in Bacteroides fragilis (strain YCH46).